The sequence spans 494 residues: Integrin beta-like protein 1 (494 aa).

A signal peptide spans Met-1–Ala-23. 40 disulfides stabilise this stretch: Cys-40–Cys-71, Cys-51–Cys-69, Cys-63–Cys-74, Cys-76–Cys-89, Cys-91–Cys-112, Cys-96–Cys-110, Cys-104–Cys-115, Cys-117–Cys-126, Cys-132–Cys-159, Cys-143–Cys-157, Cys-151–Cys-162, Cys-164–Cys-178, Cys-180–Cys-202, Cys-185–Cys-200, Cys-194–Cys-205, Cys-207–Cys-216, Cys-220–Cys-247, Cys-231–Cys-245, Cys-239–Cys-250, Cys-252–Cys-269, Cys-271–Cys-296, Cys-276–Cys-294, Cys-288–Cys-299, Cys-301–Cys-310, Cys-316–Cys-343, Cys-327–Cys-341, Cys-335–Cys-346, Cys-348–Cys-361, Cys-363–Cys-384, Cys-368–Cys-382, Cys-376–Cys-387, Cys-389–Cys-398, Cys-404–Cys-431, Cys-415–Cys-429, Cys-423–Cys-434, Cys-436–Cys-448, Cys-450–Cys-471, Cys-455–Cys-469, Cys-463–Cys-474, and Cys-476–Cys-485. I-EGF domains lie at Cys-40–Glu-90, Cys-91–Gln-127, Cys-132–Glu-179, Cys-180–Glu-217, Cys-220–Glu-270, Cys-271–Glu-311, Cys-316–Glu-362, Cys-363–Gln-399, Cys-404–Asp-449, and Cys-450–Glu-486. Residues Cys-51–Val-95 form an I repeat. The interval Cys-51–Pro-494 is cysteine-rich tandem repeats. The II repeat unit spans residues Cys-96–Met-142. An III repeat occupies Cys-143–Glu-184. The stretch at Cys-185–Arg-230 is one IV repeat. Residues Cys-231–Asp-275 form a V repeat. A VI repeat occupies Cys-276–Lys-326. The stretch at Cys-327–Arg-367 is one VII repeat. A VIII repeat occupies Cys-368–Leu-414. Asn-405 carries an N-linked (GlcNAc...) asparagine glycan. An IX repeat occupies Cys-415–Asp-454. A X repeat occupies Cys-455–Pro-494.

It localises to the secreted. In Rattus norvegicus (Rat), this protein is Integrin beta-like protein 1 (Itgbl1).